The sequence spans 207 residues: Large ribosomal subunit protein uL4 (207 aa).

Residues 45–78 (RQGTHAVKNRSAVSGGGRKPWRQKGTGRARQGSI) are disordered.

It belongs to the universal ribosomal protein uL4 family. As to quaternary structure, part of the 50S ribosomal subunit.

One of the primary rRNA binding proteins, this protein initially binds near the 5'-end of the 23S rRNA. It is important during the early stages of 50S assembly. It makes multiple contacts with different domains of the 23S rRNA in the assembled 50S subunit and ribosome. In terms of biological role, forms part of the polypeptide exit tunnel. The chain is Large ribosomal subunit protein uL4 from Lacticaseibacillus paracasei (strain ATCC 334 / BCRC 17002 / CCUG 31169 / CIP 107868 / KCTC 3260 / NRRL B-441) (Lactobacillus paracasei).